A 105-amino-acid polypeptide reads, in one-letter code: Heat shock protein HspQ (105 aa).

Residues 80–105 (AHPEQPSLDELAASIRHQLQAPHLRN) form a disordered region.

Belongs to the HspQ family.

The protein localises to the cytoplasm. Involved in the degradation of certain denaturated proteins, including DnaA, during heat shock stress. The chain is Heat shock protein HspQ from Yersinia pseudotuberculosis serotype O:1b (strain IP 31758).